The primary structure comprises 664 residues: MNKQNNYSDDSIQVLEGLEAVRKRPGMYIGSTDKRGLHHLVYEVVDNSVDEVLNGYGDAITVTINQDGSISIEDNGRGMPTGIHASGKPTAEVIFTVLHAGGKFGQGGYKTSGGLHGVGASVVNALSEWLEVEIHRDGNIYTQNFKNGGIPATGLVKTGKTKKTGTKVTFKPDSEIFKSTTTFNFDILSERLQESAFLLKDLKITLTDLRSGKEREEIYHYEEGIKEFVSYVNEGKEVLHDVTTFAGHSNGIEVDVAFQYNDQYSESILSFVNNVRTKDGGTHEVGFKTAMTRVFNEYARRINELKDKDKNLDGNDIREGLTAIISVRIPEELLQFEGQTKSKLGTSEARSAVDSVVSEKLPYYLEEKGQLSKSLVKKAIKAQQAREAARKAREDARSGKKNKRKDTLLSGKLTPAQSKNTDKNELYLVEGDSAGGSAKLGRDRKFQAILPLRGKVINTEKARLEDIFKNEEINTIIHTIGAGVGTDFKIEDSNYNRIIIMTDADTDGAHIQVLLLTFFFKYMKPLVQAGRVFIALPPLYKLEKGKGKNKKVEYAWTDEELENLQKQLGKGFILQRYKGLGEMNPEQLWETTMNPETRTLIRVQVEDEVRSSKRVTTLMGDKVAPRREWIEKHVEFGMQEDQSILDNKEVQILENEKYIEEETN.

ATP-binding positions include Tyr-7, Asn-47, Asp-74, 114–120 (GLHGVGA), and Lys-341. Positions 386–418 (REAARKAREDARSGKKNKRKDTLLSGKLTPAQS) are disordered. Basic and acidic residues predominate over residues 387 to 398 (EAARKAREDARS). Positions 424 to 538 (NELYLVEGDS…AGRVFIALPP (115 aa)) constitute a Toprim domain. Residues Glu-430, Asp-503, and Asp-505 each coordinate Mg(2+).

The protein belongs to the type II topoisomerase family. ParE type 2 subfamily. Heterotetramer composed of ParC and ParE. It depends on Mg(2+) as a cofactor. The cofactor is Mn(2+). Ca(2+) is required as a cofactor.

It carries out the reaction ATP-dependent breakage, passage and rejoining of double-stranded DNA.. In terms of biological role, topoisomerase IV is essential for chromosome segregation. It relaxes supercoiled DNA. Performs the decatenation events required during the replication of a circular DNA molecule. The sequence is that of DNA topoisomerase 4 subunit B from Staphylococcus epidermidis (strain ATCC 35984 / DSM 28319 / BCRC 17069 / CCUG 31568 / BM 3577 / RP62A).